We begin with the raw amino-acid sequence, 364 residues long: tRNA-specific 2-thiouridylase MnmA (364 aa).

ATP is bound by residues 13 to 20 (GMSGGVDS) and Met39. Residues 99-101 (NPD) form an interaction with target base in tRNA region. Catalysis depends on Cys104, which acts as the Nucleophile. Cys104 and Cys200 are oxidised to a cystine. Residue Gly128 participates in ATP binding. The interval 150–152 (KDQ) is interaction with tRNA. Residue Cys200 is the Cysteine persulfide intermediate of the active site. Residues 310-311 (RY) form an interaction with tRNA region.

It belongs to the MnmA/TRMU family.

It localises to the cytoplasm. The catalysed reaction is S-sulfanyl-L-cysteinyl-[protein] + uridine(34) in tRNA + AH2 + ATP = 2-thiouridine(34) in tRNA + L-cysteinyl-[protein] + A + AMP + diphosphate + H(+). In terms of biological role, catalyzes the 2-thiolation of uridine at the wobble position (U34) of tRNA, leading to the formation of s(2)U34. This is tRNA-specific 2-thiouridylase MnmA from Alkaliphilus oremlandii (strain OhILAs) (Clostridium oremlandii (strain OhILAs)).